The primary structure comprises 361 residues: Mitogen-activated protein kinase 14A (361 aa).

In terms of domain architecture, Protein kinase spans 25–309 (YQNLSPVGSG…AAEALAHPYF (285 aa)). Residues 31–39 (VGSGAYGTV) and lysine 54 contribute to the ATP site. The active-site Proton acceptor is the aspartate 151. The residue at position 181 (threonine 181) is a Phosphothreonine; by MAP2K6. The TXY motif lies at 181–183 (TGY). Tyrosine 183 carries the post-translational modification Phosphotyrosine; by MAP2K6.

Belongs to the protein kinase superfamily. CMGC Ser/Thr protein kinase family. MAP kinase subfamily. It depends on Mg(2+) as a cofactor. Post-translationally, dually phosphorylated on Thr-181 and Tyr-183, which activates the enzyme. In terms of tissue distribution, exclusively expressed in the ovary.

It localises to the cytoplasm. The protein localises to the nucleus. The catalysed reaction is L-seryl-[protein] + ATP = O-phospho-L-seryl-[protein] + ADP + H(+). It carries out the reaction L-threonyl-[protein] + ATP = O-phospho-L-threonyl-[protein] + ADP + H(+). Its activity is regulated as follows. Activated by threonine and tyrosine phosphorylation by the dual specificity kinase, MKK6. In terms of biological role, serine/threonine kinase which acts as an essential component of the MAP kinase signal transduction pathway. Mapk14a is one of the four p38 MAPKs which play an important role in the cascades of cellular responses evoked by extracellular stimuli such as pro-inflammatory cytokines or physical stress leading to direct activation of transcription factors. Accordingly, p38 MAPKs phosphorylate a broad range of proteins and it has been estimated that they may have approximately 200 to 300 substrates each. Some of the targets are downstream kinases which are activated through phosphorylation and further phosphorylate additional targets. This Cyprinus carpio (Common carp) protein is Mitogen-activated protein kinase 14A (mapk14a).